Consider the following 378-residue polypeptide: Carbamoyl phosphate synthase small chain (378 aa).

The interval M1–E189 is CPSase. The L-glutamine site is built by S47, G241, and G243. The Glutamine amidotransferase type-1 domain maps to H193–R378. C269 (nucleophile) is an active-site residue. L270, Q273, N311, G313, and F314 together coordinate L-glutamine. Residues H353 and E355 contribute to the active site.

The protein belongs to the CarA family. In terms of assembly, composed of two chains; the small (or glutamine) chain promotes the hydrolysis of glutamine to ammonia, which is used by the large (or ammonia) chain to synthesize carbamoyl phosphate. Tetramer of heterodimers (alpha,beta)4.

The catalysed reaction is hydrogencarbonate + L-glutamine + 2 ATP + H2O = carbamoyl phosphate + L-glutamate + 2 ADP + phosphate + 2 H(+). The enzyme catalyses L-glutamine + H2O = L-glutamate + NH4(+). The protein operates within amino-acid biosynthesis; L-arginine biosynthesis; carbamoyl phosphate from bicarbonate: step 1/1. It functions in the pathway pyrimidine metabolism; UMP biosynthesis via de novo pathway; (S)-dihydroorotate from bicarbonate: step 1/3. Functionally, small subunit of the glutamine-dependent carbamoyl phosphate synthetase (CPSase). CPSase catalyzes the formation of carbamoyl phosphate from the ammonia moiety of glutamine, carbonate, and phosphate donated by ATP, constituting the first step of 2 biosynthetic pathways, one leading to arginine and/or urea and the other to pyrimidine nucleotides. The small subunit (glutamine amidotransferase) binds and cleaves glutamine to supply the large subunit with the substrate ammonia. This is Carbamoyl phosphate synthase small chain from Pseudomonas syringae pv. tomato (strain ATCC BAA-871 / DC3000).